The following is a 444-amino-acid chain: Pestheic acid cluster transcriptional regulator 2 (444 aa).

The segment covering 1–22 has biased composition (polar residues); that stretch reads MEAADPNNNLTITSPSTLLSNP. The segment at 1–31 is disordered; that stretch reads MEAADPNNNLTITSPSTLLSNPTQPPAQPLK. The zn(2)-C6 fungal-type DNA-binding region spans 36-63; sequence CHACASSKVKCHKEKPTCSRCRKRGITC. Residues 326 to 348 form a disordered region; that stretch reads ARVGSGVSTHTTAGQYEPQVEQQ. Residues 331-348 are compositionally biased toward polar residues; the sequence is GVSTHTTAGQYEPQVEQQ.

It is found in the nucleus. Its function is as follows. Transcription factor that, with ptaR1 and ptaR3, coregulates the expression of the gene cluster that mediates the biosynthesis of pestheic acid, a diphenyl ether which is a biosynthetic precursor of the unique chloropupukeananes. The protein is Pestheic acid cluster transcriptional regulator 2 of Pestalotiopsis fici (strain W106-1 / CGMCC3.15140).